The chain runs to 246 residues: MLLIPAIDLKDGHCVRLIQGDMDQSTTFGEDPAIIARRWLDAGARRLHLVDLNGAFAGQPKNLVAIKAILKEVDGRIPVQLGGGIRDLDTIEKYIDAGISYVIIGTAAVKNPGFLQDACSAFGGHVIVGLDAKDGKVAIDGWSKLTGQDVHSVAKRFEDWGVESIIYTDIGRDGMLTGINIDATVNLAQSLKIPVIASGGLAGMADIEALCKVEDEGIEGVICGRAIYSGDLDFAAAQARADELRA.

D8 functions as the Proton acceptor in the catalytic mechanism. D131 serves as the catalytic Proton donor.

The protein belongs to the HisA/HisF family.

The protein resides in the cytoplasm. It carries out the reaction 1-(5-phospho-beta-D-ribosyl)-5-[(5-phospho-beta-D-ribosylamino)methylideneamino]imidazole-4-carboxamide = 5-[(5-phospho-1-deoxy-D-ribulos-1-ylimino)methylamino]-1-(5-phospho-beta-D-ribosyl)imidazole-4-carboxamide. Its pathway is amino-acid biosynthesis; L-histidine biosynthesis; L-histidine from 5-phospho-alpha-D-ribose 1-diphosphate: step 4/9. This is 1-(5-phosphoribosyl)-5-[(5-phosphoribosylamino)methylideneamino] imidazole-4-carboxamide isomerase from Delftia acidovorans (strain DSM 14801 / SPH-1).